Consider the following 235-residue polypeptide: Large ribosomal subunit protein uL1 (235 aa).

This sequence belongs to the universal ribosomal protein uL1 family. As to quaternary structure, part of the 50S ribosomal subunit.

Its function is as follows. Binds directly to 23S rRNA. The L1 stalk is quite mobile in the ribosome, and is involved in E site tRNA release. Functionally, protein L1 is also a translational repressor protein, it controls the translation of the L11 operon by binding to its mRNA. The polypeptide is Large ribosomal subunit protein uL1 (Synechococcus sp. (strain WH7803)).